The following is a 240-amino-acid chain: Guanine nucleotide exchange factor sopE2 (240 aa).

A GEF catalytic domain region spans residues 78–240; sequence LTSKTVKDFM…IANKYLQNAS (163 aa).

This sequence belongs to the GEF (guanine exchange factor) SopE family.

The protein localises to the secreted. In terms of biological role, activator for CDC42 by directly engaging this Rho GTPase and acting as potent guanine nucleotide exchange factor (GEF). This activation results in actin cytoskeleton rearrangements and stimulates membrane ruffling, promoting bacterial entry into non-phagocytic cells. Also activates NF-kB, p38 and ERK kinases, which are known to be involved in the induction of IL-8 expression. Chaperone InvB is required for secretion, translocation and stabilization of intracellular levels of sopE2. The chain is Guanine nucleotide exchange factor sopE2 (sopE2) from Salmonella typhimurium (strain LT2 / SGSC1412 / ATCC 700720).